The chain runs to 344 residues: Dihydroorotase (344 aa).

Positions 13 and 15 each coordinate Zn(2+). Residues 15 to 17 and Asn-41 each bind substrate; that span reads HLR. Zn(2+) contacts are provided by Lys-99, His-136, and His-174. Lys-99 is modified (N6-carboxylysine). His-136 is a binding site for substrate. Leu-219 lines the substrate pocket. Asp-247 serves as a coordination point for Zn(2+). Asp-247 is a catalytic residue. Positions 251 and 263 each coordinate substrate.

Belongs to the metallo-dependent hydrolases superfamily. DHOase family. Class II DHOase subfamily. Homodimer. It depends on Zn(2+) as a cofactor.

The catalysed reaction is (S)-dihydroorotate + H2O = N-carbamoyl-L-aspartate + H(+). It participates in pyrimidine metabolism; UMP biosynthesis via de novo pathway; (S)-dihydroorotate from bicarbonate: step 3/3. In terms of biological role, catalyzes the reversible cyclization of carbamoyl aspartate to dihydroorotate. The chain is Dihydroorotase from Microcystis aeruginosa (strain NIES-843 / IAM M-2473).